A 470-amino-acid chain; its full sequence is Solute carrier family 7 member 13 (470 aa).

Topologically, residues 1–11 (MDRGEKIQLKR) are cytoplasmic. Residues 12-32 (VFGYWWGTSFLLINIIGAGIF) form a helical membrane-spanning segment. The Extracellular portion of the chain corresponds to 33 to 45 (VSPKGVLAYSCMN). A helical transmembrane segment spans residues 46–66 (VGVSLCVWAGCAILAMTSTLC). Residues 67–87 (SAEISISFPCSGAQYYFLKRY) are Cytoplasmic-facing. A helical membrane pass occupies residues 88–108 (FGSTVAFLNLWTSLFLGSGVV). The Extracellular segment spans residues 109-128 (AGQALLLAEYSIQPFFPSCS). A helical membrane pass occupies residues 129–149 (VPKLPKKCLALAMLWIVGILT). At 150-162 (SRGVKEVTWLQIA) the chain is on the cytoplasmic side. The helical transmembrane segment at 163–183 (SSVLKVSILSFISLTGVVFLI) threads the bilayer. Residues 184–206 (RGKKENVERFQNAFDAELPDISH) lie on the Extracellular side of the membrane. Residues 207 to 227 (LIQAIFQGYFAYSGGACFTLI) traverse the membrane as a helical segment. Topologically, residues 228 to 240 (AGELKKPRTTIPK) are cytoplasmic. A helical transmembrane segment spans residues 241–261 (CIFTALPLVTVVYLLVNISYL). Topologically, residues 262 to 287 (TVLTPREILSSDAVAITWADRAFPSL) are extracellular. A helical membrane pass occupies residues 288–308 (AWIMPFAISTSLFSNLLISIF). Residues 309 to 336 (KSSRPIYLASQEGQLPLLFNTLNSHSSP) lie on the Cytoplasmic side of the membrane. A helical membrane pass occupies residues 337–357 (FTAVLLLVTLGSLAIILTSLI). Position 358 (D358) is a topological domain, extracellular. A helical transmembrane segment spans residues 359-379 (LINYIFFTGSLWSILLMIGIL). Over 380–393 (RRRYQEPNLSIPYK) the chain is Cytoplasmic. The helical transmembrane segment at 394–414 (VFLSFPLATIVIDVGLVVIPL) threads the bilayer. Over 415-421 (VKSPNVH) the chain is Extracellular. A helical transmembrane segment spans residues 422 to 442 (YVYVLLLVLSGLLFYIPLIHF). The Cytoplasmic segment spans residues 443–470 (KIRLAWFEKMTCYLQLLFNICLPDVSEE).

The protein belongs to the amino acid-polyamine-organocation (APC) superfamily. Disulfide-linked heterodimer composed of the catalytic light subunit SLC7A13 and the heavy subunit SLC3A1. As to expression, expressed in the kidney.

Its subcellular location is the apical cell membrane. The enzyme catalyses L-cystine(out) + L-aspartate(in) = L-cystine(in) + L-aspartate(out). It catalyses the reaction L-cystine(out) = L-cystine(in). It carries out the reaction L-aspartate(in) + L-glutamate(out) = L-aspartate(out) + L-glutamate(in). The catalysed reaction is L-aspartate(in) + L-glutamine(out) = L-aspartate(out) + L-glutamine(in). The enzyme catalyses L-aspartate(in) + L-methionine(out) = L-aspartate(out) + L-methionine(in). It catalyses the reaction L-leucine(out) + L-aspartate(in) = L-leucine(in) + L-aspartate(out). It carries out the reaction L-valine(out) + L-aspartate(in) = L-valine(in) + L-aspartate(out). The catalysed reaction is L-aspartate(in) + L-phenylalanine(out) = L-aspartate(out) + L-phenylalanine(in). The enzyme catalyses L-tyrosine(out) + L-aspartate(in) = L-tyrosine(in) + L-aspartate(out). It catalyses the reaction L-tryptophan(out) + L-aspartate(in) = L-tryptophan(in) + L-aspartate(out). Its function is as follows. Associates with SLC3A1/rBAT to form a functional heterodimeric complex that transports anionic and neutral amino acids across the apical plasma membrane of renal epithelium. Preferentially mediates exchange transport, but can also operate via facilitated diffusion. May act as a major transporter for L-cystine in late proximal tubules, ensuring its reabsorption from the luminal fluid in exchange for cytosolic L-glutamate or L-aspartate. This is Solute carrier family 7 member 13 (SLC7A13) from Homo sapiens (Human).